Here is a 375-residue protein sequence, read N- to C-terminus: Succinyl-diaminopimelate desuccinylase (375 aa).

His-66 contributes to the Zn(2+) binding site. Asp-68 is a catalytic residue. Zn(2+) is bound at residue Asp-99. Glu-133 (proton acceptor) is an active-site residue. Zn(2+)-binding residues include Glu-134, Glu-162, and His-348.

It belongs to the peptidase M20A family. DapE subfamily. In terms of assembly, homodimer. Requires Zn(2+) as cofactor. Co(2+) is required as a cofactor.

The catalysed reaction is N-succinyl-(2S,6S)-2,6-diaminopimelate + H2O = (2S,6S)-2,6-diaminopimelate + succinate. It participates in amino-acid biosynthesis; L-lysine biosynthesis via DAP pathway; LL-2,6-diaminopimelate from (S)-tetrahydrodipicolinate (succinylase route): step 3/3. Catalyzes the hydrolysis of N-succinyl-L,L-diaminopimelic acid (SDAP), forming succinate and LL-2,6-diaminopimelate (DAP), an intermediate involved in the bacterial biosynthesis of lysine and meso-diaminopimelic acid, an essential component of bacterial cell walls. In Pectobacterium atrosepticum (strain SCRI 1043 / ATCC BAA-672) (Erwinia carotovora subsp. atroseptica), this protein is Succinyl-diaminopimelate desuccinylase.